The following is a 413-amino-acid chain: MAEAGPQAPPPPGTPSRHEKSLGLLTTKFVSLLQEAKDGVLDLKLAADTLAVRQKRRIYDITNVLEGIGLIEKKSKNSIQWKGVGPGCNTREIADKLIELKAEIEELQQREQELDQHKVWVQQSIRNVTEDVQNSCLAYVTHEDICRCFAGDTLLAIRAPSGTSLEVPIPEGLNGQKKYQIHLKSVSGPIEVLLVNKEAWSSPPVAVPVPPPEDLLQSPSAVSTPPPLPKPALAQSQEASRPNSPQLTPTAVPGSAEVQGMAGPAAEITVSGGPGTDSKDSGELSSLPLGPTTLDTRPLQSSALLDSSSSSSSSSSSSSNSNSSSSSGPNPSTSFEPIKADPTGVLELPKELSEIFDPTRECMSSELLEELMSSEVFAPLLRLSPPPGDHDYIYNLDESEGVCDLFDVPVLNL.

The segment at 1–20 (MAEAGPQAPPPPGTPSRHEK) is disordered. At alanine 2 the chain carries N-acetylalanine. Residues 16–85 (SRHEKSLGLL…KNSIQWKGVG (70 aa)) mediate DNA binding. Residues 43-65 (LKLAADTLAVRQKRRIYDITNVL) are leucine-zipper. A DEF box motif is present at residues 48–85 (DTLAVRQKRRIYDITNVLEGIGLIEKKSKNSIQWKGVG). Residues 86–181 (PGCNTREIAD…GLNGQKKYQI (96 aa)) are dimerization. The disordered stretch occupies residues 211–340 (PPEDLLQSPS…PSTSFEPIKA (130 aa)). Polar residues-rich tracts occupy residues 234–249 (AQSQ…QLTP) and 293–306 (TLDT…ALLD). Low complexity predominate over residues 307–327 (SSSSSSSSSSSSSNSNSSSSS). Positions 337–413 (PIKADPTGVL…DLFDVPVLNL (77 aa)) are transactivation. Serine 384 carries the phosphoserine modification. The short motif at 389-392 (DHDY) is the HCFC1-binding-motif (HBM) element. The tract at residues 390-407 (HDYIYNLDESEGVCDLFD) is interaction with RBL1 and RBL2.

It belongs to the E2F/DP family. Component of the DRTF1/E2F transcription factor complex. Binds cooperatively with TFDP1/Dp-1 to E2F sites. The E2F4/TFDP1 dimer interacts preferentially with pocket protein RBL1, which inhibits the E2F transactivation domain. Lower affinity interaction has been found with retinoblastoma protein RB1. Interacts with TRRAP, which probably mediates its interaction with histone acetyltransferase complexes, leading to transcription activation. Interacts with HCFC1. Component of the DREAM complex (also named LINC complex) at least composed of E2F4, E2F5, LIN9, LIN37, LIN52, LIN54, MYBL1, MYBL2, RBL1, RBL2, RBBP4, TFDP1 and TFDP2. The complex exists in quiescent cells where it represses cell cycle-dependent genes. It dissociates in S phase when LIN9, LIN37, LIN52 and LIN54 form a subcomplex that binds to MYBL2. Interacts with PML (isoform PML-1, isoform PML-2, isoform PML-3, isoform PML-4 and isoform PML-5). Interacts with CEBPA (when phosphorylated). Differentially phosphorylated in vivo. As to expression, found in all tissue examined including heart, brain, placenta, lung, liver, skeletal muscle, kidney and pancreas.

It localises to the nucleus. Transcription activator that binds DNA cooperatively with DP proteins through the E2 recognition site, 5'-TTTC[CG]CGC-3' found in the promoter region of a number of genes whose products are involved in cell cycle regulation or in DNA replication. The DRTF1/E2F complex functions in the control of cell-cycle progression from G1 to S phase. E2F4 binds with high affinity to RBL1 and RBL2. In some instances can also bind RB1. Specifically required for multiciliate cell differentiation: together with MCIDAS and E2F5, binds and activate genes required for centriole biogenesis. The sequence is that of Transcription factor E2F4 (E2F4) from Homo sapiens (Human).